The following is a 37-amino-acid chain: Trypsin inhibitor 3 (37 aa).

3 disulfides stabilise this stretch: Cys-4–Cys-21, Cys-11–Cys-25, and Cys-20–Cys-36.

Trypsin inhibitor. The sequence is that of Trypsin inhibitor 3 from Spinacia oleracea (Spinach).